Reading from the N-terminus, the 137-residue chain is MLQPKRTKFRKQFKGRIHGAAKGGTDLNFGAFGLKALEPERVTARQIEAARRAITRQMKRQGRVWIRVFPDVPVTAKPTEVRMGKGKGSVEFWACRVKPGRIMFEIDGVAEDIAREALRLGAAKLPIKTRFIQRIAE.

The protein belongs to the universal ribosomal protein uL16 family. In terms of assembly, part of the 50S ribosomal subunit.

Functionally, binds 23S rRNA and is also seen to make contacts with the A and possibly P site tRNAs. This chain is Large ribosomal subunit protein uL16, found in Chelativorans sp. (strain BNC1).